A 443-amino-acid chain; its full sequence is Xaa-Pro dipeptidase (443 aa).

Positions 246, 257, 339, 384, and 423 each coordinate Mn(2+).

It belongs to the peptidase M24B family. Bacterial-type prolidase subfamily. Requires Mn(2+) as cofactor.

It catalyses the reaction Xaa-L-Pro dipeptide + H2O = an L-alpha-amino acid + L-proline. Its function is as follows. Splits dipeptides with a prolyl residue in the C-terminal position. In Yersinia pestis bv. Antiqua (strain Nepal516), this protein is Xaa-Pro dipeptidase.